Consider the following 142-residue polypeptide: Hemoglobin subunit alpha-3 (142 aa).

Positions 2 to 142 (VLSAADKSNV…VSTVLTSKYR (141 aa)) constitute a Globin domain. His-59 is a binding site for O2. Residue His-88 coordinates heme b.

Belongs to the globin family. As to quaternary structure, heterotetramer of two alpha chains and two beta chains. Red blood cells.

In terms of biological role, involved in oxygen transport from the lung to the various peripheral tissues. The polypeptide is Hemoglobin subunit alpha-3 (Bubalus bubalis (Domestic water buffalo)).